The primary structure comprises 496 residues: UDP-glycosyltransferase 84A2 (496 aa).

Histidine 23 functions as the Proton acceptor in the catalytic mechanism. Histidine 23 is a binding site for an anthocyanidin. The UDP-alpha-D-glucose site is built by glutamine 352, histidine 367, tryptophan 370, asparagine 371, serine 372, and glutamate 375. Glycine 390 lines the an anthocyanidin pocket. UDP-alpha-D-glucose contacts are provided by aspartate 391 and glutamine 392.

The protein belongs to the UDP-glycosyltransferase family. Expressed in roots, cotyledons, leaf veins and trichomes.

The catalysed reaction is (E)-sinapate + UDP-alpha-D-glucose = 1-O-(trans-sinapoyl)-beta-D-glucose + UDP. Functionally, sinapate glucosyltransferase (SGT) required for the biosynthesis of the glucose ester sinapoylglucose and subsequently sinapoylmalate and sinapoylcholine. Is the major SGT activity in plant. Plays an important role in sinapoylation of anthocyanins. Sinapoylglucose produced by UGT84A2 is a significant source of sinapoyl moieties for anthocyanins. Indole-3-butyric acid (IBA)-specific glucosyltransferase that catalyzes the glucosylation of the auxin IBA, but not indole-3-acetic acid (IAA). May be involved in flowering regulation through IBA-mediated transcriptional repression of the auxin-response factors ARF6 and ARF8 and downstream flowering pathway genes. Can glucosylate the phytotoxic xenobiotic compound 2,4,5-trichlorophenol (TCP). This Arabidopsis thaliana (Mouse-ear cress) protein is UDP-glycosyltransferase 84A2.